A 152-amino-acid chain; its full sequence is Ribosome maturation factor RimP (152 aa).

This sequence belongs to the RimP family.

Its subcellular location is the cytoplasm. Its function is as follows. Required for maturation of 30S ribosomal subunits. This Paraburkholderia xenovorans (strain LB400) protein is Ribosome maturation factor RimP.